Consider the following 399-residue polypeptide: (R)-2-hydroxy-4-methylpentanoate CoA-transferase (399 aa).

Asp-171 serves as the catalytic Nucleophile.

It belongs to the CoA-transferase III family. In terms of assembly, homodimer.

The enzyme catalyses 4-methylpentanoyl-CoA + (2R)-hydroxy-4-methylpentanoate = (R)-2-hydroxy-4-methylpentanoyl-CoA + 4-methylpentanoate. Its pathway is amino-acid degradation; L-leucine degradation. Involved in the reductive branch of L-leucine fermentation. Catalyzes the transfer of the CoA moiety from 4-methylpentanoyl-CoA (isocaproyl-CoA) to (R)-2-hydroxy-4-methylpentanoate ((R)-2-hydroxyisocaproate), leading to the formation of (R)-2-hydroxy-4-methylpentanoyl-CoA. Other CoA thioesters, such as acetyl-CoA or butyryl-CoA, are not accepted as substrates. The protein is (R)-2-hydroxy-4-methylpentanoate CoA-transferase of Clostridioides difficile (Peptoclostridium difficile).